The primary structure comprises 133 residues: Small ribosomal subunit protein bS6 (133 aa).

Positions 106–125 (REERVERAPRAPRPEVKAEP) are enriched in basic and acidic residues. The disordered stretch occupies residues 106–133 (REERVERAPRAPRPEVKAEPEAEATAEA).

The protein belongs to the bacterial ribosomal protein bS6 family.

Its function is as follows. Binds together with bS18 to 16S ribosomal RNA. This chain is Small ribosomal subunit protein bS6, found in Psychromonas ingrahamii (strain DSM 17664 / CCUG 51855 / 37).